The following is a 227-amino-acid chain: uncharacterized protein (227 aa).

The AMMECR1 domain maps to 5-220; it reads TSSPYAFYAF…IAWDEFETGL (216 aa).

This is an uncharacterized protein from Kluyveromyces lactis (strain ATCC 8585 / CBS 2359 / DSM 70799 / NBRC 1267 / NRRL Y-1140 / WM37) (Yeast).